The primary structure comprises 1052 residues: Carboxylic acid reductase (1052 aa).

The tract at residues 21 to 344 is adenylation (A) domain; it reads RALNEPNREW…ATEFTPFPFY (324 aa). Residues 334–335, threonine 339, and 419–422 each bind AMP; these read SA and YQGR. One can recognise a Carrier domain in the interval 560-643; sequence SSSDALIVSI…RLADYLLSIV (84 aa). Serine 595 is subject to O-(pantetheine 4'-phosphoryl)serine. A carboxylic acid reductase (R) domain region spans residues 684-979; that stretch reads GQVVVITGTT…QKIVPLDEWL (296 aa). NADP(+) is bound by residues 693–696, arginine 718, 774–776, serine 814, tyrosine 844, and lysine 848; these read TGGI and NQW.

It belongs to the adenylate-forming reductase family. Mg(2+) is required as a cofactor.

The catalysed reaction is an aromatic aldehyde + AMP + diphosphate + NADP(+) = an aromatic carboxylate + ATP + NADPH + H(+). It catalyses the reaction a carboxylate + ATP + NADPH + H(+) = an aldehyde + AMP + diphosphate + NADP(+). It carries out the reaction benzoate + ATP + NADPH + H(+) = benzaldehyde + AMP + diphosphate + NADP(+). The enzyme catalyses (E)-cinnamate + ATP + NADPH + H(+) = (E)-cinnamaldehyde + AMP + diphosphate + NADP(+). The catalysed reaction is piperonylate + ATP + NADPH + H(+) = piperonal + AMP + diphosphate + NADP(+). It catalyses the reaction salicylate + ATP + NADPH + H(+) = salicylaldehyde + AMP + diphosphate + NADP(+). It carries out the reaction 3-hydroxybenzoate + ATP + NADPH + H(+) = 3-hydroxybenzaldehyde + AMP + diphosphate + NADP(+). The enzyme catalyses 2-methoxybenzoate + ATP + NADPH + H(+) = 2-methoxybenzaldehyde + AMP + diphosphate + NADP(+). The catalysed reaction is 3-methoxybenzoate + ATP + NADPH + H(+) = 3-methoxybenzaldehyde + AMP + diphosphate + NADP(+). It catalyses the reaction 4-hydroxybenzoate + ATP + NADPH + H(+) = 4-hydroxybenzaldehyde + AMP + diphosphate + NADP(+). It carries out the reaction 4-methoxybenzoate + ATP + NADPH + H(+) = 4-methoxybenzaldehyde + AMP + diphosphate + NADP(+). The enzyme catalyses 3-phenylpropanoate + ATP + NADPH + H(+) = 3-phenylpropanal + AMP + diphosphate + NADP(+). The catalysed reaction is picolinate + ATP + NADPH + H(+) = picolinal + AMP + diphosphate + NADP(+). It catalyses the reaction propanoate + ATP + NADPH + H(+) = propanal + AMP + diphosphate + NADP(+). It carries out the reaction butanoate + ATP + NADPH + H(+) = butanal + AMP + diphosphate + NADP(+). The enzyme catalyses pentanoate + ATP + NADPH + H(+) = pentanal + AMP + diphosphate + NADP(+). The catalysed reaction is hexanoate + ATP + NADPH + H(+) = hexanal + AMP + diphosphate + NADP(+). It catalyses the reaction heptanoate + ATP + NADPH + H(+) = heptanal + AMP + diphosphate + NADP(+). It carries out the reaction octanoate + ATP + NADPH + H(+) = octanal + AMP + diphosphate + NADP(+). The enzyme catalyses nonanoate + ATP + NADPH + H(+) = nonanal + AMP + diphosphate + NADP(+). Carboxylic acid reductase that shows a broad range of substrate specificity towards aromatic acids, especially to phenyl carboxylic and phenyl acrylic acids, to convert them into their respective aldehydes. Also able to use aliphatic acids as substrates. This Neurospora crassa (strain ATCC 24698 / 74-OR23-1A / CBS 708.71 / DSM 1257 / FGSC 987) protein is Carboxylic acid reductase.